The chain runs to 173 residues: Alpha-crystallin A chain (173 aa).

At Met-1 the chain carries N-acetylmethionine. Residues 1–63 (MDVTIQHPWF…RTVLDSGISE (63 aa)) form a required for complex formation with BFSP1 and BFSP2 region. Gln-6 carries the deamidated glutamine; partial modification. Residue Ser-45 is modified to Phosphoserine. The residue at position 50 (Gln-50) is a Deamidated glutamine; partial. The region spanning 52–162 (LFRTVLDSGI…GHSERAIPVS (111 aa)) is the sHSP domain. Lys-70 bears the N6-acetyllysine mark. Position 90 is a deamidated glutamine; partial (Gln-90). Residue Lys-99 is modified to N6-acetyllysine. Zn(2+) contacts are provided by His-100, Glu-102, and His-107. Residue Ser-122 is modified to Phosphoserine. Residue Asn-123 is modified to Deamidated asparagine; partial. A disordered region spans residues 145–173 (KVQSGLDAGHSERAIPVSREEKPSSAPSS). Gln-147 bears the Deamidated glutamine; partial mark. Residues 153–167 (GHSERAIPVSREEKP) show a composition bias toward basic and acidic residues. Residue His-154 coordinates Zn(2+). O-linked (GlcNAc) serine glycosylation occurs at Ser-162.

This sequence belongs to the small heat shock protein (HSP20) family. As to quaternary structure, heteromer composed of three CRYAA and one CRYAB subunits. Inter-subunit bridging via zinc ions enhances stability, which is crucial as there is no protein turn over in the lens. Can also form homodimers and homotetramers (dimers of dimers) which serve as the building blocks of homooligomers. Within homooligomers, the zinc-binding motif is created from residues of 3 different molecules. His-100 and Glu-102 from one molecule are ligands of the zinc ion, and His-107 and His-154 residues from additional molecules complete the site with tetrahedral coordination geometry. Part of a complex required for lens intermediate filament formation composed of BFSP1, BFSP2 and CRYAA. Post-translationally, acetylation at Lys-70 may increase chaperone activity. Undergoes age-dependent proteolytical cleavage at the C-terminus.

The protein resides in the cytoplasm. It is found in the nucleus. Contributes to the transparency and refractive index of the lens. Acts as a chaperone, preventing aggregation of various proteins under a wide range of stress conditions. Required for the correct formation of lens intermediate filaments as part of a complex composed of BFSP1, BFSP2 and CRYAA. This chain is Alpha-crystallin A chain (CRYAA), found in Ochotona princeps (Southern American pika).